Consider the following 511-residue polypeptide: DnaJ homolog 1, mitochondrial (511 aa).

Residues 1–55 (MAFQQGVLSRCSGVFRHHVGHSRHINNILYRHAIAFASIAPRIPKSSFHTSAIRN) constitute a mitochondrion transit peptide. Positions 59 to 127 (FKDPYDTLGL…RQQYDQFGPA (69 aa)) constitute a J domain. A CR-type zinc finger spans residues 217 to 297 (SKNVQLRFSA…CHGEGVQVNR (81 aa)). CXXCXGXG motif repeat units follow at residues 230–237 (CSTCSGTG), 247–254 (CSTCHGTG), 269–276 (CPTCNGEG), and 285–292 (CTKCHGEG).

Its subcellular location is the mitochondrion. Functionally, plays a role in mitochondrial biogenesis and protein folding. The sequence is that of DnaJ homolog 1, mitochondrial (MDJ1) from Saccharomyces cerevisiae (strain ATCC 204508 / S288c) (Baker's yeast).